Here is a 1214-residue protein sequence, read N- to C-terminus: BOS complex subunit NOMO1 (1214 aa).

Positions 1-23 (MRAGRCAAALLLLLLSGAGRAIG) are cleaved as a signal peptide. Residues 24–1150 (SEDIVVGCGG…RKLPEQDIAQ (1127 aa)) are Extracellular-facing. N-linked (GlcNAc...) asparagine glycosylation is found at Asn-42, Asn-210, and Asn-610. Residues 692 to 720 (KSAQELRREQQLAEIETRRQEREKNGKEE) are a coiled coil. The span at 708–726 (TRRQEREKNGKEEGEEGRA) shows a compositional bias: basic and acidic residues. The interval 708–733 (TRRQEREKNGKEEGEEGRARPPGQEM) is disordered. The helical transmembrane segment at 1151–1167 (GSYIALPLTLLLLLAGY) threads the bilayer. The Cytoplasmic segment spans residues 1168–1214 (NHDKLIPLLLQLTSRLQGVRALGQAASDSSGPEDMKRQTKKQKTRRT). The tract at residues 1190–1214 (GQAASDSSGPEDMKRQTKKQKTRRT) is disordered. Phosphoserine occurs at positions 1196 and 1197. Residues 1205-1214 (QTKKQKTRRT) show a composition bias toward basic residues.

Component of the back of Sec61 (BOS) complex, composed of NCLN/Nicalin, NOMO (NOMO1, NOMO2 or NOMO3) and TMEM147. The BOS complex is part of the multi-pass translocon (MPT) complex, composed of three subcomplexes, the GEL complex (composed of RAB5IF/OPTI and TMCO1), the BOS complex (composed of NCLN/Nicalin, NOMO and TMEM147) and the PAT complex (composed of WDR83OS/Asterix and CCDC47). The MPT complex associates with the SEC61 complex.

The protein localises to the endoplasmic reticulum membrane. In terms of biological role, component of the multi-pass translocon (MPT) complex that mediates insertion of multi-pass membrane proteins into the lipid bilayer of membranes. The MPT complex takes over after the SEC61 complex: following membrane insertion of the first few transmembrane segments of proteins by the SEC61 complex, the MPT complex occludes the lateral gate of the SEC61 complex to promote insertion of subsequent transmembrane regions. The sequence is that of BOS complex subunit NOMO1 from Mus musculus (Mouse).